A 118-amino-acid chain; its full sequence is Probable non-functional immunoglobulin lambda variable 1-50 (118 aa).

The signal sequence occupies residues 1–19 (MAWSSLLLTLLAHCTGSWA). Residues 20–44 (QSVLTQPPSVSGAPGQRVTISCTGS) form a framework-1 region. In terms of domain architecture, Ig-like spans 20-118 (QSVLTQPPSV…CKAWDNSLNA (99 aa)). A disulfide bond links Cys-41 and Cys-109. The segment at 45–53 (SSNIGAGYV) is complementarity-determining-1. The interval 54–70 (VHWYQQLPGTAPKLLIY) is framework-2. Positions 71-73 (GNS) are complementarity-determining-2. Positions 74–109 (NRPSGVPDQFSGSKSGTSASLAITGLQSEDEADYYC) are framework-3. The complementarity-determining-3 stretch occupies residues 110–118 (KAWDNSLNA).

Immunoglobulins are composed of two identical heavy chains and two identical light chains; disulfide-linked.

It is found in the secreted. It localises to the cell membrane. Its function is as follows. Probable non-functional open reading frame (ORF) of V region of the variable domain of immunoglobulin light chains. Non-functional ORF generally cannot participate in the synthesis of a productive immunoglobulin chain due to altered V-(D)-J or switch recombination and/or splicing site (at mRNA level) and/or conserved amino acid change (protein level). Immunoglobulins, also known as antibodies, are membrane-bound or secreted glycoproteins produced by B lymphocytes. In the recognition phase of humoral immunity, the membrane-bound immunoglobulins serve as receptors which, upon binding of a specific antigen, trigger the clonal expansion and differentiation of B lymphocytes into immunoglobulins-secreting plasma cells. Secreted immunoglobulins mediate the effector phase of humoral immunity, which results in the elimination of bound antigens. The antigen binding site is formed by the variable domain of one heavy chain, together with that of its associated light chain. Thus, each immunoglobulin has two antigen binding sites with remarkable affinity for a particular antigen. The variable domains are assembled by a process called V-(D)-J rearrangement and can then be subjected to somatic hypermutations which, after exposure to antigen and selection, allow affinity maturation for a particular antigen. The polypeptide is Probable non-functional immunoglobulin lambda variable 1-50 (Homo sapiens (Human)).